Here is a 71-residue protein sequence, read N- to C-terminus: ATP synthase subunit c (71 aa).

The next 2 membrane-spanning stretches (helical) occupy residues 4-24 (IAAA…NGQV) and 47-67 (FIGV…ALIL).

Belongs to the ATPase C chain family. In terms of assembly, F-type ATPases have 2 components, F(1) - the catalytic core - and F(0) - the membrane proton channel. F(1) has five subunits: alpha(3), beta(3), gamma(1), delta(1), epsilon(1). F(0) has three main subunits: a(1), b(2) and c(10-14). The alpha and beta chains form an alternating ring which encloses part of the gamma chain. F(1) is attached to F(0) by a central stalk formed by the gamma and epsilon chains, while a peripheral stalk is formed by the delta and b chains.

Its subcellular location is the cell membrane. Functionally, f(1)F(0) ATP synthase produces ATP from ADP in the presence of a proton or sodium gradient. F-type ATPases consist of two structural domains, F(1) containing the extramembraneous catalytic core and F(0) containing the membrane proton channel, linked together by a central stalk and a peripheral stalk. During catalysis, ATP synthesis in the catalytic domain of F(1) is coupled via a rotary mechanism of the central stalk subunits to proton translocation. Key component of the F(0) channel; it plays a direct role in translocation across the membrane. A homomeric c-ring of between 10-14 subunits forms the central stalk rotor element with the F(1) delta and epsilon subunits. The protein is ATP synthase subunit c of Enterococcus hirae (strain ATCC 9790 / DSM 20160 / JCM 8729 / LMG 6399 / NBRC 3181 / NCIMB 6459 / NCDO 1258 / NCTC 12367 / WDCM 00089 / R).